The sequence spans 363 residues: tRNA N6-adenosine threonylcarbamoyltransferase (363 aa).

Residues His121 and His125 each contribute to the Fe cation site. Substrate contacts are provided by residues 143–147, Asp176, Gly189, and Asn287; that span reads LASGG. Asp315 is a binding site for Fe cation.

This sequence belongs to the KAE1 / TsaD family. Fe(2+) is required as a cofactor.

Its subcellular location is the cytoplasm. It carries out the reaction L-threonylcarbamoyladenylate + adenosine(37) in tRNA = N(6)-L-threonylcarbamoyladenosine(37) in tRNA + AMP + H(+). In terms of biological role, required for the formation of a threonylcarbamoyl group on adenosine at position 37 (t(6)A37) in tRNAs that read codons beginning with adenine. Is involved in the transfer of the threonylcarbamoyl moiety of threonylcarbamoyl-AMP (TC-AMP) to the N6 group of A37, together with TsaE and TsaB. TsaD likely plays a direct catalytic role in this reaction. The protein is tRNA N6-adenosine threonylcarbamoyltransferase of Rhodopseudomonas palustris (strain TIE-1).